The primary structure comprises 440 residues: Zinc finger MYND domain-containing protein 10 (440 aa).

The interaction with DNAAF11 stretch occupies residues Q366 to K440. 8 residues coordinate Zn(2+): C394, C397, C405, C408, C414, C418, H426, and C430. The MYND-type zinc-finger motif lies at C394 to C430.

The protein belongs to the ZMYND10 family. As to quaternary structure, interacts (via C-terminus) with DNAAF11 (via CS domain); this interaction stabilizes DNAAF11 at the protein level. Interacts (via C-terminus) with DNAL1; this interaction stabilizes DNAL1 at the protein level. Interacts with DNAAF4, HSPA8, IQUB, RUVBL2 and DYNTL5.

The protein localises to the cytoplasm. The protein resides in the cytoskeleton. It localises to the microtubule organizing center. Its subcellular location is the centrosome. It is found in the centriolar satellite. The protein localises to the apical cell membrane. The protein resides in the dynein axonemal particle. Functionally, plays a role in axonemal structure organization and motility. Involved in axonemal pre-assembly of inner and outer dynein arms (IDA and ODA, respectively) for proper axoneme building for cilia motility. May act by indirectly regulating transcription of dynein proteins. The polypeptide is Zinc finger MYND domain-containing protein 10 (Homo sapiens (Human)).